The sequence spans 213 residues: Protein-L-isoaspartate O-methyltransferase (213 aa).

Ser61 is a catalytic residue.

It belongs to the methyltransferase superfamily. L-isoaspartyl/D-aspartyl protein methyltransferase family.

It localises to the cytoplasm. It carries out the reaction [protein]-L-isoaspartate + S-adenosyl-L-methionine = [protein]-L-isoaspartate alpha-methyl ester + S-adenosyl-L-homocysteine. Its function is as follows. Catalyzes the methyl esterification of L-isoaspartyl residues in peptides and proteins that result from spontaneous decomposition of normal L-aspartyl and L-asparaginyl residues. It plays a role in the repair and/or degradation of damaged proteins. The sequence is that of Protein-L-isoaspartate O-methyltransferase from Maricaulis maris (strain MCS10) (Caulobacter maris).